A 200-amino-acid polypeptide reads, in one-letter code: Small ribosomal subunit protein uS4 (200 aa).

The S4 RNA-binding domain occupies serine 92–valine 155.

This sequence belongs to the universal ribosomal protein uS4 family. Part of the 30S ribosomal subunit. Contacts protein S5. The interaction surface between S4 and S5 is involved in control of translational fidelity.

One of the primary rRNA binding proteins, it binds directly to 16S rRNA where it nucleates assembly of the body of the 30S subunit. Its function is as follows. With S5 and S12 plays an important role in translational accuracy. The chain is Small ribosomal subunit protein uS4 from Staphylococcus aureus (strain MRSA252).